Here is a 139-residue protein sequence, read N- to C-terminus: Thioredoxin H-type (139 aa).

Positions Glu20–Asp132 constitute a Thioredoxin domain. Catalysis depends on nucleophile residues Cys58 and Cys61. Cys58 and Cys61 form a disulfide bridge.

Its subcellular location is the cytoplasm. Its function is as follows. Participates in various redox reactions through the reversible oxidation of the active center dithiol to a disulfide. The H form is known to activate a number of cytosolic enzymes. This chain is Thioredoxin H-type, found in Populus jackii (Balm of Gilead).